We begin with the raw amino-acid sequence, 394 residues long: DNA replication and repair protein RecF (394 aa).

An ATP-binding site is contributed by 30–37; it reads GRNGFGKT.

Belongs to the RecF family.

The protein localises to the cytoplasm. The RecF protein is involved in DNA metabolism; it is required for DNA replication and normal SOS inducibility. RecF binds preferentially to single-stranded, linear DNA. It also seems to bind ATP. This chain is DNA replication and repair protein RecF, found in Corynebacterium glutamicum (strain R).